The chain runs to 182 residues: UPF0397 protein SPG_0438 (182 aa).

5 consecutive transmembrane segments (helical) span residues 10-30, 46-66, 73-93, 109-129, and 148-168; these read VVAVGIGAALFVVIGMINIPT, LLSIIFGPIIGLLVGLIGHAI, YGLWWTWIIASGLFGLVVGLF, ILIFNLIQLLANALVWGVLAP, and IVAGIANGVSVAIAGTLLLLA.

This sequence belongs to the UPF0397 family.

It is found in the cell membrane. This is UPF0397 protein SPG_0438 from Streptococcus pneumoniae serotype 19F (strain G54).